Here is a 215-residue protein sequence, read N- to C-terminus: ATP-dependent dethiobiotin synthetase BioD (215 aa).

13–18 (DIGKTV) is an ATP binding site. Threonine 17 is a binding site for Mg(2+). Lysine 38 is a catalytic residue. Threonine 42 is a binding site for substrate. ATP contacts are provided by residues aspartate 50, 115-118 (EGAG), and 175-176 (NH). Residues aspartate 50 and glutamate 115 each coordinate Mg(2+).

Belongs to the dethiobiotin synthetase family. In terms of assembly, homodimer. Mg(2+) serves as cofactor.

It localises to the cytoplasm. The catalysed reaction is (7R,8S)-7,8-diammoniononanoate + CO2 + ATP = (4R,5S)-dethiobiotin + ADP + phosphate + 3 H(+). Its pathway is cofactor biosynthesis; biotin biosynthesis; biotin from 7,8-diaminononanoate: step 1/2. Its function is as follows. Catalyzes a mechanistically unusual reaction, the ATP-dependent insertion of CO2 between the N7 and N8 nitrogen atoms of 7,8-diaminopelargonic acid (DAPA, also called 7,8-diammoniononanoate) to form a ureido ring. This Neisseria meningitidis serogroup C (strain 053442) protein is ATP-dependent dethiobiotin synthetase BioD.